The sequence spans 206 residues: High frequency lysogenization protein HflD homolog (206 aa).

Belongs to the HflD family.

It localises to the cytoplasm. The protein localises to the cell inner membrane. The sequence is that of High frequency lysogenization protein HflD homolog from Marinobacter nauticus (strain ATCC 700491 / DSM 11845 / VT8) (Marinobacter aquaeolei).